Consider the following 154-residue polypeptide: 17.6 kDa class I heat shock protein (154 aa).

In terms of domain architecture, sHSP spans 40–154 (ETSAFANTRI…PDVKSIEISG (115 aa)).

The protein belongs to the small heat shock protein (HSP20) family. Forms oligomeric structures.

It localises to the cytoplasm. The polypeptide is 17.6 kDa class I heat shock protein (Solanum peruvianum (Peruvian tomato)).